Reading from the N-terminus, the 1747-residue chain is Retroelement silencing factor 1 (1747 aa).

K216 is covalently cross-linked (Glycyl lysine isopeptide (Lys-Gly) (interchain with G-Cter in SUMO2)). Phosphoserine is present on S221. Polar residues predominate over residues 261–272 (TSAVPSQQYATQ). The interval 261–280 (TSAVPSQQYATQTDKRPPPP) is disordered. A Glycyl lysine isopeptide (Lys-Gly) (interchain with G-Cter in SUMO2) cross-link involves residue K707. 3 disordered regions span residues 833-856 (PLTQ…NVNQ), 923-956 (PQKP…GFQK), and 1073-1101 (EGSV…KDPA). The segment covering 842-856 (ESTNGNSEVTPNVNQ) has biased composition (polar residues). Basic and acidic residues predominate over residues 937-956 (REPEKQLDNTTENKDFGFQK). Polar residues predominate over residues 1073–1087 (EGSVGQQTTYQTSED). The span at 1089 to 1101 (TADKTSSDSKDPA) shows a compositional bias: basic and acidic residues. A Glycyl lysine isopeptide (Lys-Gly) (interchain with G-Cter in SUMO2) cross-link involves residue K1136. Residue S1145 is modified to Phosphoserine. Residues 1200 to 1274 (EEKQKEQCSP…KSLPRTEQEL (75 aa)) are disordered. Positions 1217–1226 (QGERTSDRDV) are enriched in basic and acidic residues. T1240 is modified (phosphothreonine). Residues 1242 to 1261 (PDGKSHFPELQDDSRKDTPK) show a composition bias toward basic and acidic residues. S1358 carries the post-translational modification Phosphoserine. Residues K1528 and K1636 each participate in a glycyl lysine isopeptide (Lys-Gly) (interchain with G-Cter in SUMO2) cross-link. Residues 1686-1716 (KRTQKDSQERDNVNSRLSKRSFSADGFEMLQ) are disordered. The segment covering 1689–1698 (QKDSQERDNV) has biased composition (basic and acidic residues). S1708 bears the Phosphoserine mark. K1723 participates in a covalent cross-link: Glycyl lysine isopeptide (Lys-Gly) (interchain with G-Cter in SUMO2). Position 1740 is a phosphoserine (S1740).

In terms of assembly, interacts with SETDB1.

It is found in the nucleus. Its function is as follows. Plays a role in the regulation of imprinted gene expression, regulates repressive epigenetic modifications associated with SETDB1. Required for the recruitment or accumulation of SETDB1 to the endogenous retroviruses (ERVs) and maintenance of repressive chromatin configuration, contributing to a subset of the SETDB1-dependent ERV silencing in embryonic stem cells. The sequence is that of Retroelement silencing factor 1 from Homo sapiens (Human).